Here is a 405-residue protein sequence, read N- to C-terminus: Cytochrome P450 109 (405 aa).

C351 serves as a coordination point for heme.

It belongs to the cytochrome P450 family. Requires heme as cofactor.

In terms of biological role, cytochromes P450 are a group of heme-thiolate monooxygenases. They oxidize a variety of structurally unrelated compounds, including steroids, fatty acids, and xenobiotics. The chain is Cytochrome P450 109 (cyp109) from Bacillus spizizenii (strain ATCC 23059 / NRRL B-14472 / W23) (Bacillus subtilis subsp. spizizenii).